The primary structure comprises 592 residues: Pectinesterase/pectinesterase inhibitor 3 (592 aa).

The first 35 residues, 1-35 (MAPSMKEIFSKDNFKKNKKLVLLSAAVALLFVAAV), serve as a signal peptide directing secretion. Residues 36-238 (AGISAGASKA…KITSNNRKLK (203 aa)) constitute a propeptide, removed in mature 42 kDa form. The propeptide at 36–273 (AGISAGASKA…WLSAGDRRLL (238 aa)) is removed in mature 38 kDa form. Residues 53-212 (PSSHAVLRSS…EHMCSNALAM (160 aa)) form a pectinesterase inhibitor 3 region. 2 N-linked (GlcNAc...) asparagine glycosylation sites follow: asparagine 96 and asparagine 215. The segment at 281–578 (DATVAADGSG…YTAGQFIGGG (298 aa)) is pectinesterase 3. 2 residues coordinate substrate: threonine 356 and glutamine 386. Aspartate 409 (proton donor; for pectinesterase activity) is an active-site residue. Cysteines 423 and 443 form a disulfide. Aspartate 430 functions as the Nucleophile; for pectinesterase activity in the catalytic mechanism. Residues glutamine 454, arginine 498, and tryptophan 500 each coordinate substrate.

This sequence in the N-terminal section; belongs to the PMEI family. It in the C-terminal section; belongs to the pectinesterase family. As to quaternary structure, interacts with BIIDXI and At5g11420. Binds reversibly to PMEI4, PMEI7 and PMEI8 to be inhibited; the stability of the PME3-PMEIs complexes and the inhibition of the pectin methylesterase (PME) activity is pH-dependent, based on protonation status of amino-acids at the complex interface. As to expression, expressed in roots, cotyledons, hypocotyls, seedlings, leaves, stems, flowers, dry seeds and siliques. Accumulates in etiolated hypocotyls (at protein level).

The protein localises to the secreted. The protein resides in the extracellular space. It localises to the apoplast. It is found in the cell wall. The catalysed reaction is [(1-&gt;4)-alpha-D-galacturonosyl methyl ester](n) + n H2O = [(1-&gt;4)-alpha-D-galacturonosyl](n) + n methanol + n H(+). Its pathway is glycan metabolism; pectin degradation; 2-dehydro-3-deoxy-D-gluconate from pectin: step 1/5. Regulated negatively by pectinesterase inhibitors (e.g. PMEI3, PMEI4, PMEI7 and PMEI9) in a pH-dependent manner, mainly in slightly acidic conditions (pH 6.0 and 5.0), especially in dark-grown hypocotyls; this processus relies on changes in the protonation of amino acids involved in intermolecular and intramolecular interactions. In terms of biological role, acts in the modification of cell walls via demethylesterification of cell wall pectin. Required for zinc Zn(2+) homeostasis and to monitor Zn(2+) influence on cell wall-controlled growth processes such as root cell elongation. Monitors seed germination and favors root hairs production. Prevents cruciferin seed storage proteins activity, but promotes the expression of genes involved in cell wall organization and remodeling as well as genes involved in lipid and protein metabolism, during post-germinative growth of seedlings. Confers sensitivity to Zn(2+) when overexpressed. Acts as a susceptibility factor required for the initial colonization of the host tissue by virulent pathogens including Botrytis cinerea and Pectobacterium carotovorum, probably by facilitating cell wall pectine degradation by pathogen pectic enzymes after its demethylesterification. The chain is Pectinesterase/pectinesterase inhibitor 3 from Arabidopsis thaliana (Mouse-ear cress).